The chain runs to 284 residues: 2-dehydro-3-deoxyphosphooctonate aldolase (284 aa).

Belongs to the KdsA family.

It localises to the cytoplasm. The enzyme catalyses D-arabinose 5-phosphate + phosphoenolpyruvate + H2O = 3-deoxy-alpha-D-manno-2-octulosonate-8-phosphate + phosphate. The protein operates within carbohydrate biosynthesis; 3-deoxy-D-manno-octulosonate biosynthesis; 3-deoxy-D-manno-octulosonate from D-ribulose 5-phosphate: step 2/3. It participates in bacterial outer membrane biogenesis; lipopolysaccharide biosynthesis. The chain is 2-dehydro-3-deoxyphosphooctonate aldolase from Klebsiella pneumoniae subsp. pneumoniae (strain ATCC 700721 / MGH 78578).